Consider the following 351-residue polypeptide: MAAPPCPPRRPISAPCFLLCFLLGFVAGLFPFAHRHLHLDLHLPLPPPATAILVREDPPSVVVDVDTPLPAAAEERKLLLVVTPTRARPLQAYYLRRLAHTLRLAPSPLLWLVVESGAATRDTAALLRGCGVMYRHLSSPVPDAPQDRPRRRGRRQDRPAVDSRARQRNTALDHIEHHRLHGIVYFADEDNVYSLDLFYHLRDIRSFGTWPVATLAPGKSKTILQGPVCEGSRVVGWHTTDRSKNQRRFHVDMSGFAFNSSKLWDAKNRGHQAWNYIRQLDTAKEGFQETAFIEQLVEDETHMEGVPPGCSKIMNFHLHLEDKNAIYLNGWQTTQNLDVIIPLKKEARPLL.

Residues 1-11 (MAAPPCPPRRP) lie on the Cytoplasmic side of the membrane. A helical; Signal-anchor for type II membrane protein membrane pass occupies residues 12–32 (ISAPCFLLCFLLGFVAGLFPF). At 33-351 (AHRHLHLDLH…PLKKEARPLL (319 aa)) the chain is on the lumenal side. The tract at residues 138-169 (SSPVPDAPQDRPRRRGRRQDRPAVDSRARQRN) is disordered. A compositionally biased stretch (basic and acidic residues) spans 156 to 169 (QDRPAVDSRARQRN). Asn-259 carries an N-linked (GlcNAc...) asparagine glycan.

This sequence belongs to the glycosyltransferase 43 family.

It localises to the golgi apparatus membrane. Functionally, involved in the synthesis of glucuronoxylan hemicellulose in secondary cell walls. In Oryza sativa subsp. japonica (Rice), this protein is Probable glucuronosyltransferase Os10g0205300.